The primary structure comprises 380 residues: MAAQRDDEAGWSAEAARRVWGGAVPLQVHLHDADVTTLPPPPPFLTLGPRIGYLPLLVPIIKAHFSSTLPPGIDTVWFEYKGLPLKWYIPIGVLYDLLCADPERPWNLTVHFRGYPSEILTLCDGEDSVKWSYMNSLKEAAFIITGNSKNVMNMSQADQGALWQSVMKGNLDGYMNISTRLKLGPFEEDCLVRTSSVEGQQGSDEPESPGSGKPCRVPVRLYVRSVQEDLYDLEDALPVGDWESISYINRPFEVRREEGRSYITLEHALKTLLPEFFSSKASRIPDDSETAPQAPDSAPNDDSDVTPRSCEKLESSASSSPQEANVANKGKIVKLVRVQGIEVDMDIPFLWVANNLKNPECYLHICVYVGTRKREPKDGR.

Lys138 is covalently cross-linked (Glycyl lysine isopeptide (Lys-Gly) (interchain with G-Cter in ATG12)). Residues 194 to 203 (TSSVEGQQGS) show a composition bias toward polar residues. 2 disordered regions span residues 194–214 (TSSV…SGKP) and 283–309 (RIPD…TPRS).

This sequence belongs to the ATG5 family. In terms of assembly, conjugated to ATG12. In terms of processing, conjugated to ATG12; which is essential for autophagy.

It localises to the cytoplasm. Required for autophagy. Conjugation to ATG12 is essential for plant nutrient recycling. The protein is Autophagy protein 5 (ATG5) of Oryza sativa subsp. japonica (Rice).